Here is a 428-residue protein sequence, read N- to C-terminus: Sorting nexin-31 (428 aa).

Positions 1–107 constitute a PX domain; that stretch reads MHICIPVTEE…EYFKKLQMDT (107 aa).

It belongs to the sorting nexin family.

May be involved in protein trafficking. This chain is Sorting nexin-31 (snx31), found in Xenopus tropicalis (Western clawed frog).